The primary structure comprises 125 residues: Fumarate reductase subunit D (125 aa).

Transmembrane regions (helical) follow at residues Phe-30–Ile-50, Ala-62–Trp-82, and Val-105–Ile-125.

It belongs to the FrdD family. As to quaternary structure, part of an enzyme complex containing four subunits: a flavoprotein (FrdA), an iron-sulfur protein (FrdB), and two hydrophobic anchor proteins (FrdC and FrdD).

It is found in the cell inner membrane. Anchors the catalytic components of the fumarate reductase complex to the cell membrane, binds quinones. In Vibrio parahaemolyticus serotype O3:K6 (strain RIMD 2210633), this protein is Fumarate reductase subunit D.